The sequence spans 91 residues: Large ribosomal subunit protein uL23c (91 aa).

Belongs to the universal ribosomal protein uL23 family. In terms of assembly, part of the 50S ribosomal subunit.

Its subcellular location is the plastid. It is found in the chloroplast. Binds to 23S rRNA. The sequence is that of Large ribosomal subunit protein uL23c (rpl23) from Marchantia polymorpha (Common liverwort).